Consider the following 325-residue polypeptide: Deoxyhypusine hydroxylase (325 aa).

An N-acetylserine modification is found at Ser-2. HEAT-like PBS-type repeat units follow at residues 77-103 and 110-136; these read LKHE…VMLD and VRHE…AAKE. Fe cation-binding residues include His-79, Glu-80, His-112, and Glu-113. Ser-126 carries the phosphoserine modification. Thr-187 is subject to Phosphothreonine. HEAT-like PBS-type repeat units lie at residues 202-231, 235-261, and 268-294; these read LFQR…FSAE, FKHE…VLGR, and VRHE…YLND. Fe cation is bound by residues His-237, Glu-238, His-270, and Glu-271. Phosphoserine is present on Ser-281.

The protein belongs to the deoxyhypusine hydroxylase family. Fe(2+) is required as a cofactor.

The protein localises to the cytoplasm. It is found in the nucleus. It carries out the reaction [eIF5A protein]-deoxyhypusine + AH2 + O2 = [eIF5A protein]-hypusine + A + H2O. It functions in the pathway protein modification; eIF5A hypusination. Catalyzes the hydroxylation of the N(6)-(4-aminobutyl)-L-lysine intermediate to form hypusine, an essential post-translational modification only found in mature eIF-5A factor. This chain is Deoxyhypusine hydroxylase, found in Saccharomyces cerevisiae (strain ATCC 204508 / S288c) (Baker's yeast).